Reading from the N-terminus, the 220-residue chain is Deoxyribose-phosphate aldolase (220 aa).

Asp-92 functions as the Proton donor/acceptor in the catalytic mechanism. Residue Lys-155 is the Schiff-base intermediate with acetaldehyde of the active site. Residue Lys-184 is the Proton donor/acceptor of the active site.

This sequence belongs to the DeoC/FbaB aldolase family. DeoC type 1 subfamily.

Its subcellular location is the cytoplasm. The catalysed reaction is 2-deoxy-D-ribose 5-phosphate = D-glyceraldehyde 3-phosphate + acetaldehyde. Its pathway is carbohydrate degradation; 2-deoxy-D-ribose 1-phosphate degradation; D-glyceraldehyde 3-phosphate and acetaldehyde from 2-deoxy-alpha-D-ribose 1-phosphate: step 2/2. Catalyzes a reversible aldol reaction between acetaldehyde and D-glyceraldehyde 3-phosphate to generate 2-deoxy-D-ribose 5-phosphate. This Symbiobacterium thermophilum (strain DSM 24528 / JCM 14929 / IAM 14863 / T) protein is Deoxyribose-phosphate aldolase.